A 265-amino-acid polypeptide reads, in one-letter code: Apolipoprotein A-I (265 aa).

Positions 1–18 (MKAVVLTLAVLFLTGSQA) are cleaved as a signal peptide. 2 consecutive repeat copies span residues 67 to 88 (LKLV…EHLG) and 89 to 110 (PVAQ…REIN). The segment at 67–265 (LKLVDNWDTL…IDEAAKKLTA (199 aa)) is 10 X approximate tandem repeats. One copy of the 3; half-length repeat lies at 111-121 (KDLEDVRQKTQ). A run of 5 repeats spans residues 122–143 (PFLD…QKVE), 144–165 (PLSA…EQVT), 166–187 (PLGE…TQLA), 188–209 (PYSE…EGGS), and 210–231 (ASLA…EKAK). The residue at position 193 (Met193) is a Methionine sulfoxide. One copy of the 9; half-length repeat lies at 232 to 242 (PVLEDIHQGLM). 2 positions are modified to methionine sulfoxide: Met242 and Met244. Copy 10 of the repeat occupies 243–265 (PMWESFKTGVLNVIDEAAKKLTA).

It belongs to the apolipoprotein A1/A4/E family. Homodimer. Interacts with APOA1BP and CLU. Component of a sperm activating protein complex (SPAP), consisting of APOA1, an immunoglobulin heavy chain, an immunoglobulin light chain and albumin. Interacts with NDRG1. Interacts with SCGB3A2. Interacts with NAXE and YJEFN3. In terms of processing, glycosylated. Post-translationally, palmitoylated. Phosphorylation sites are present in the extracellular medium. As to expression, major protein of plasma HDL, also found in chylomicrons.

It is found in the secreted. Its function is as follows. Participates in the reverse transport of cholesterol from tissues to the liver for excretion by promoting cholesterol efflux from tissues and by acting as a cofactor for the lecithin cholesterol acyltransferase (LCAT). As part of the SPAP complex, activates spermatozoa motility. The chain is Apolipoprotein A-I (APOA1) from Tupaia belangeri (Common tree shrew).